The sequence spans 421 residues: Thymidine phosphorylase (421 aa).

It belongs to the thymidine/pyrimidine-nucleoside phosphorylase family. As to quaternary structure, homodimer.

The enzyme catalyses thymidine + phosphate = 2-deoxy-alpha-D-ribose 1-phosphate + thymine. Functionally, the enzymes which catalyze the reversible phosphorolysis of pyrimidine nucleosides are involved in the degradation of these compounds and in their utilization as carbon and energy sources, or in the rescue of pyrimidine bases for nucleotide synthesis. This chain is Thymidine phosphorylase (deoA), found in Mycoplasma genitalium (strain ATCC 33530 / DSM 19775 / NCTC 10195 / G37) (Mycoplasmoides genitalium).